Reading from the N-terminus, the 595-residue chain is 3-hydroxy-3-methylglutaryl-coenzyme A reductase 2 (595 aa).

A glycan (N-linked (GlcNAc...) asparagine) is linked at Asn35. Helical transmembrane passes span 48 to 68 (LPLY…MYFL) and 92 to 112 (AIVS…IGFV). A linker region spans residues 113–183 (QTFVSRGNND…SPLITPASSE (71 aa)). N-linked (GlcNAc...) asparagine glycosylation is present at Asn121. A catalytic region spans residues 184 to 595 (EDEEIINSVV…KYNRSTKASS (412 aa)). Glu278 serves as the catalytic Charge relay system. Asn342 carries N-linked (GlcNAc...) asparagine glycosylation. Catalysis depends on Lys410, which acts as the Charge relay system. Asn455 carries an N-linked (GlcNAc...) asparagine glycan. Residue Asp486 is the Charge relay system of the active site. Catalysis depends on His584, which acts as the Proton donor. Residue Asn588 is glycosylated (N-linked (GlcNAc...) asparagine).

Belongs to the HMG-CoA reductase family. In terms of tissue distribution, expressed in young flowers and in mature sepals and ovaries.

The protein localises to the endoplasmic reticulum membrane. The catalysed reaction is (R)-mevalonate + 2 NADP(+) + CoA = (3S)-3-hydroxy-3-methylglutaryl-CoA + 2 NADPH + 2 H(+). The protein operates within metabolic intermediate biosynthesis; (R)-mevalonate biosynthesis; (R)-mevalonate from acetyl-CoA: step 3/3. Catalyzes the synthesis of mevalonate. The specific precursor of all isoprenoid compounds present in plants. The sequence is that of 3-hydroxy-3-methylglutaryl-coenzyme A reductase 2 (HMG2) from Solanum tuberosum (Potato).